The primary structure comprises 235 residues: 2-C-methyl-D-erythritol 4-phosphate cytidylyltransferase (235 aa).

This sequence belongs to the IspD/TarI cytidylyltransferase family. IspD subfamily.

The enzyme catalyses 2-C-methyl-D-erythritol 4-phosphate + CTP + H(+) = 4-CDP-2-C-methyl-D-erythritol + diphosphate. It participates in isoprenoid biosynthesis; isopentenyl diphosphate biosynthesis via DXP pathway; isopentenyl diphosphate from 1-deoxy-D-xylulose 5-phosphate: step 2/6. Its function is as follows. Catalyzes the formation of 4-diphosphocytidyl-2-C-methyl-D-erythritol from CTP and 2-C-methyl-D-erythritol 4-phosphate (MEP). This is 2-C-methyl-D-erythritol 4-phosphate cytidylyltransferase from Mycolicibacterium paratuberculosis (strain ATCC BAA-968 / K-10) (Mycobacterium paratuberculosis).